The following is a 315-amino-acid chain: Cyclin-dependent kinase B2-2 (315 aa).

Residues 16-306 form the Protein kinase domain; that stretch reads FEKLEKVGEG…AKKAMEHPYF (291 aa). ATP contacts are provided by residues 22–30 and lysine 45; that span reads VGEGTYGKV. Tyrosine 27 carries the phosphotyrosine modification. Aspartate 147 acts as the Proton acceptor in catalysis. Threonine 181 is subject to Phosphothreonine.

This sequence belongs to the protein kinase superfamily. CMGC Ser/Thr protein kinase family. CDC2/CDKX subfamily. In terms of tissue distribution, expressed in flowers.

It carries out the reaction L-seryl-[protein] + ATP = O-phospho-L-seryl-[protein] + ADP + H(+). It catalyses the reaction L-threonyl-[protein] + ATP = O-phospho-L-threonyl-[protein] + ADP + H(+). The enzyme catalyses [DNA-directed RNA polymerase] + ATP = phospho-[DNA-directed RNA polymerase] + ADP + H(+). The protein is Cyclin-dependent kinase B2-2 (CDKB2-2) of Arabidopsis thaliana (Mouse-ear cress).